The following is a 128-amino-acid chain: Ribosome-binding factor A (128 aa).

The protein belongs to the RbfA family. As to quaternary structure, monomer. Binds 30S ribosomal subunits, but not 50S ribosomal subunits or 70S ribosomes.

It is found in the cytoplasm. In terms of biological role, one of several proteins that assist in the late maturation steps of the functional core of the 30S ribosomal subunit. Associates with free 30S ribosomal subunits (but not with 30S subunits that are part of 70S ribosomes or polysomes). Required for efficient processing of 16S rRNA. May interact with the 5'-terminal helix region of 16S rRNA. This chain is Ribosome-binding factor A, found in Saccharophagus degradans (strain 2-40 / ATCC 43961 / DSM 17024).